We begin with the raw amino-acid sequence, 380 residues long: 3-dehydroquinate synthase (380 aa).

NAD(+)-binding positions include Gly100–Asp104, Thr124–Thr125, Lys137, and Lys146. Zn(2+) is bound by residues Glu179, His251, and His267. A disordered region spans residues Tyr320–Pro343.

The protein belongs to the sugar phosphate cyclases superfamily. Dehydroquinate synthase family. It depends on NAD(+) as a cofactor. Co(2+) serves as cofactor. Requires Zn(2+) as cofactor.

It is found in the cytoplasm. The enzyme catalyses 7-phospho-2-dehydro-3-deoxy-D-arabino-heptonate = 3-dehydroquinate + phosphate. It functions in the pathway metabolic intermediate biosynthesis; chorismate biosynthesis; chorismate from D-erythrose 4-phosphate and phosphoenolpyruvate: step 2/7. Functionally, catalyzes the conversion of 3-deoxy-D-arabino-heptulosonate 7-phosphate (DAHP) to dehydroquinate (DHQ). The polypeptide is 3-dehydroquinate synthase (Tropheryma whipplei (strain Twist) (Whipple's bacillus)).